We begin with the raw amino-acid sequence, 476 residues long: Serine/threonine-protein kinase PBL36 (476 aa).

Residues 126-412 (FRPESLLGEG…VEALKPLPNL (287 aa)) form the Protein kinase domain. ATP is bound by residues 132–140 (LGEGGFGCV) and lysine 164. Position 209 is a phosphotyrosine (tyrosine 209). Aspartate 259 acts as the Proton acceptor in catalysis. 2 positions are modified to phosphoserine: serine 263 and serine 293. Phosphothreonine is present on residues threonine 294 and threonine 299. Tyrosine 307 is modified (phosphotyrosine). The segment at 431–476 (NGVRTQGGGFVSRNGPPMRSLSSLNLPQASPYRYARQSPKPKGKEP) is disordered.

This sequence belongs to the protein kinase superfamily. Ser/Thr protein kinase family. Interacts with SD129. In terms of processing, phosphorylated by SD129 in response to the pathogen-associated molecular pattern (PAMP) 3-OH-C10:0, a medium-chain 3-hydroxy fatty acid.

Its subcellular location is the cell membrane. The enzyme catalyses L-seryl-[protein] + ATP = O-phospho-L-seryl-[protein] + ADP + H(+). It carries out the reaction L-threonyl-[protein] + ATP = O-phospho-L-threonyl-[protein] + ADP + H(+). Functionally, involved in chitin-triggered immune signaling and is required for reactive oxygen species (ROS) production. Acts downstream of SD129 in defense signaling triggered by the pathogen-associated molecular pattern (PAMP) 3-OH-C10:0, a medium-chain 3-hydroxy fatty acid. The chain is Serine/threonine-protein kinase PBL36 from Arabidopsis thaliana (Mouse-ear cress).